A 1217-amino-acid polypeptide reads, in one-letter code: ATP-dependent helicase/nuclease subunit A (1217 aa).

One can recognise a UvrD-like helicase ATP-binding domain in the interval 10–475 (VIWTDAQWQS…IDLSQNFRSR (466 aa)). ATP is bound at residue 31–38 (AAAGSGKT). The region spanning 476–786 (KEVLSTTNYI…RMMTIHSSKG (311 aa)) is the UvrD-like helicase C-terminal domain.

Belongs to the helicase family. AddA subfamily. As to quaternary structure, heterodimer of AddA and AddB/RexB. Requires Mg(2+) as cofactor.

It catalyses the reaction Couples ATP hydrolysis with the unwinding of duplex DNA by translocating in the 3'-5' direction.. The enzyme catalyses ATP + H2O = ADP + phosphate + H(+). Functionally, the heterodimer acts as both an ATP-dependent DNA helicase and an ATP-dependent, dual-direction single-stranded exonuclease. Recognizes the chi site generating a DNA molecule suitable for the initiation of homologous recombination. The AddA nuclease domain is required for chi fragment generation; this subunit has the helicase and 3' -&gt; 5' nuclease activities. The polypeptide is ATP-dependent helicase/nuclease subunit A (Staphylococcus aureus (strain USA300)).